The following is a 501-amino-acid chain: L-arabinose isomerase (501 aa).

Positions 306, 333, 350, and 450 each coordinate Mn(2+).

The protein belongs to the arabinose isomerase family. In terms of assembly, homohexamer. Mn(2+) is required as a cofactor.

The catalysed reaction is beta-L-arabinopyranose = L-ribulose. The protein operates within carbohydrate degradation; L-arabinose degradation via L-ribulose; D-xylulose 5-phosphate from L-arabinose (bacterial route): step 1/3. In terms of biological role, catalyzes the conversion of L-arabinose to L-ribulose. This chain is L-arabinose isomerase, found in Pectobacterium atrosepticum (strain SCRI 1043 / ATCC BAA-672) (Erwinia carotovora subsp. atroseptica).